Here is a 595-residue protein sequence, read N- to C-terminus: L-fucose isomerase (595 aa).

Catalysis depends on proton acceptor residues glutamate 341 and aspartate 365. Mn(2+) is bound by residues glutamate 341, aspartate 365, and histidine 531.

The protein belongs to the L-fucose isomerase family. Mn(2+) is required as a cofactor.

Its subcellular location is the cytoplasm. It carries out the reaction L-fucose = L-fuculose. It participates in carbohydrate degradation; L-fucose degradation; L-lactaldehyde and glycerone phosphate from L-fucose: step 1/3. Converts the aldose L-fucose into the corresponding ketose L-fuculose. The sequence is that of L-fucose isomerase from Clostridium perfringens (strain 13 / Type A).